A 447-amino-acid chain; its full sequence is Signal recognition particle 54 kDa protein (447 aa).

GTP is bound by residues 105–112, 187–191, and 247–250; these read GVQGSGKT, DTAGR, and TKMD.

Belongs to the GTP-binding SRP family. SRP54 subfamily. In terms of assembly, part of the signal recognition particle protein translocation system, which is composed of SRP and FtsY. Archaeal SRP consists of a 7S RNA molecule of 300 nucleotides and two protein subunits: SRP54 and SRP19.

The protein resides in the cytoplasm. It carries out the reaction GTP + H2O = GDP + phosphate + H(+). Its function is as follows. Involved in targeting and insertion of nascent membrane proteins into the cytoplasmic membrane. Binds to the hydrophobic signal sequence of the ribosome-nascent chain (RNC) as it emerges from the ribosomes. The SRP-RNC complex is then targeted to the cytoplasmic membrane where it interacts with the SRP receptor FtsY. This is Signal recognition particle 54 kDa protein from Hyperthermus butylicus (strain DSM 5456 / JCM 9403 / PLM1-5).